Reading from the N-terminus, the 360-residue chain is AA9 family lytic polysaccharide monooxygenase A (360 aa).

The first 19 residues, 1-19 (MKTSFGLLALAAAAKLVNA), serve as a signal peptide directing secretion. Cu(2+)-binding residues include H20 and H102. Cysteines 62 and 183 form a disulfide. O2 is bound at residue H169. Y180 contacts Cu(2+). The interval 254–293 (TSAASASSTKAPATTAAPVQTESAKPATSTTQAAAPTTLV) is disordered. Residues 322-358 (GVVKMYAQCGGMNYSGSTTCESGLTCKQWNPYYHQCV) form the CBM1 domain. N334 carries N-linked (GlcNAc...) asparagine glycosylation.

It belongs to the polysaccharide monooxygenase AA9 family. The cofactor is Cu(2+).

It is found in the secreted. The enzyme catalyses [(1-&gt;4)-beta-D-glucosyl]n+m + reduced acceptor + O2 = 4-dehydro-beta-D-glucosyl-[(1-&gt;4)-beta-D-glucosyl]n-1 + [(1-&gt;4)-beta-D-glucosyl]m + acceptor + H2O.. Functionally, lytic polysaccharide monooxygenase (LPMO) that depolymerizes crystalline and amorphous polysaccharides via the oxidation of scissile alpha- or beta-(1-4)-glycosidic bonds, yielding C4 oxidation products. Catalysis by LPMOs requires the reduction of the active-site copper from Cu(II) to Cu(I) by a reducing agent and H(2)O(2) or O(2) as a cosubstrate. This chain is AA9 family lytic polysaccharide monooxygenase A (eglD), found in Aspergillus terreus (strain NIH 2624 / FGSC A1156).